The following is a 179-amino-acid chain: UPF0227 protein Shewmr7_1806 (179 aa).

Belongs to the UPF0227 family.

The sequence is that of UPF0227 protein Shewmr7_1806 from Shewanella sp. (strain MR-7).